Reading from the N-terminus, the 232-residue chain is Protein FAM246B (232 aa).

Over residues 19–31 (EVLRRVTGRRRDP) the composition is skewed to basic and acidic residues. Disordered regions lie at residues 19–47 (EVLR…RAPG), 80–101 (AAGA…VCGE), 151–179 (ALLP…GPTL), and 191–232 (AASR…GGGD). Positions 211 to 220 (APARKNHKKM) are enriched in basic residues.

The protein belongs to the FAM246 family.

In Homo sapiens (Human), this protein is Protein FAM246B.